The primary structure comprises 672 residues: Probable copper-transporting P-type ATPase B (672 aa).

Basic and acidic residues predominate over residues 1–17 (MEHHSHQEHENHTSHGN). A disordered region spans residues 1–22 (MEHHSHQEHENHTSHGNHEHHH). 6 helical membrane-spanning segments follow: residues 30-50 (FFIS…MGVK), 55-75 (ISFT…FFYG), 93-113 (GMMT…LYAF), 125-145 (TMDF…GHWI), 282-302 (GYLF…WMLI), and 313-333 (LVTV…PLVT). The active-site 4-aspartylphosphate intermediate is the Asp365. 2 residues coordinate Mg(2+): Asp563 and Asp567. The next 2 helical transmembrane spans lie at 621-643 (LWWG…ASIG) and 647-669 (SPAV…AFTL).

It belongs to the cation transport ATPase (P-type) (TC 3.A.3) family. Type IB subfamily.

The protein resides in the cell membrane. The catalysed reaction is Cu(+)(in) + ATP + H2O = Cu(+)(out) + ADP + phosphate + H(+). In terms of biological role, involved in copper transport. This chain is Probable copper-transporting P-type ATPase B (copB), found in Staphylococcus aureus.